Here is a 1117-residue protein sequence, read N- to C-terminus: MMRPSSRQPYVCWQCLSRKDSGQHIALNTRKARVASLSSLASWPISSASIAPRPTRQWDRTLRLFRERRQGLSTSTSLLGRKIPEISNEALEDFALPLEPDLQHLQDSQPKTTKRSAHLSIRQRLKQWEAENPEPFHSIPSDFALPDRPINAFTSKRSEHMLEIENIDNDNATAQVHDQDLIDTQVTPRVQAGDLVELKSEDWNIGVLAVCLGSFNGIDHFYAVTGKWFASSNFKSGFIVKNFITNSADLQPVIGALPSTVGDMSILVELQKLRAGPTREHGAGLITKMLDFQNTSRQIYQSNLERLSNPHRHLPEEEQLMTLGEIAEFLLPPKLKQSSTGFPPAALYAVYNNIRTFFDDFFHPLGQGTAGPSSIIFHVAARSDIENVARVERMVRDHYSPELLDRKSRREHDRLEPVLRQARLAIDHSRKMREWSSHGMLGPTTRVLPASTYSWSQDALTVIGVIHMWAASDVFPRSSKYQWIGAAVLRALGRYQDADVLDATVGWTFLQEIGWLMPWEIHARHSLRLPGLQVNRAGGLLPSPEEQQPAELDEDVLAPLRQDFYTSTVYCIDAPNAKEIDDGVSLEKTDKEGEYWIHVHIADPTSRIRPDSSLAKRAALMTQTSYLPGHVDKMISDEAVVAEFSLAPGRPSLTFSARLNEEGTLLDHKVTPGRIGDVVYITPQDVATAVGPVDAGIPKVSTPDVVLEVGTPPSAEDEAPTRKMTKPDELSEQNVKDLEILSRLAAAIHKVRIQKGSVPIFLPSPSADFSLVNARIEHTPSGFLACTNDPYISVKYSVSGGLHPIVDDLMGTANQIAALWCYERGIPIPFRTNLLAAQNEEALRAYTQDVIYPQLIAGKQPSLEEMRTLRNLLGGHDIAATPTFIYTMGVDIYTKATSPLRRYSDLLVHWQIQAALLEEHKRLAQGSQSLVIRKFDKYHLKPPMDDKQAARLGLPFTASHLENKVFPHLRVRERHAKTLANIDGRNELILQALVRAWRFGEGKEGQVPEKFTYTVVNVQNTCVRGRIDYFDLWAEIDLDNLAGFSLLSNMRAGDVLTVQLADVNVHMRKIVVKPVEFVQRGPERGRLFAEEQEGEGEVENGGEYIDVEHEVLQPQGR.

Positions 561–916 constitute an RNB domain; it reads RQDFYTSTVY…LVHWQIQAAL (356 aa). The disordered stretch occupies residues 705–730; that stretch reads VVLEVGTPPSAEDEAPTRKMTKPDEL. A compositionally biased stretch (basic and acidic residues) spans 719–730; the sequence is APTRKMTKPDEL.

It belongs to the RNR ribonuclease family. As to quaternary structure, homodimer.

The protein resides in the mitochondrion. Functionally, required for RNA 5'- and 3'-end processing and splicing. May act on the RNA processing enzymes directly, or it may act on other regulatory molecules, which influence the activity or synthesis of these enzymes. This Neurospora crassa (strain ATCC 24698 / 74-OR23-1A / CBS 708.71 / DSM 1257 / FGSC 987) protein is Mitochondrial protein cyt-4 (cyt-4).